Reading from the N-terminus, the 198-residue chain is Peptidyl-tRNA hydrolase (198 aa).

Tyr-18 is a binding site for tRNA. The active-site Proton acceptor is the His-23. Residues Phe-69, Asn-71, and Asn-117 each coordinate tRNA.

Belongs to the PTH family. Monomer.

The protein resides in the cytoplasm. It catalyses the reaction an N-acyl-L-alpha-aminoacyl-tRNA + H2O = an N-acyl-L-amino acid + a tRNA + H(+). In terms of biological role, hydrolyzes ribosome-free peptidyl-tRNAs (with 1 or more amino acids incorporated), which drop off the ribosome during protein synthesis, or as a result of ribosome stalling. Its function is as follows. Catalyzes the release of premature peptidyl moieties from peptidyl-tRNA molecules trapped in stalled 50S ribosomal subunits, and thus maintains levels of free tRNAs and 50S ribosomes. The polypeptide is Peptidyl-tRNA hydrolase (Idiomarina loihiensis (strain ATCC BAA-735 / DSM 15497 / L2-TR)).